Reading from the N-terminus, the 197-residue chain is A-type ATP synthase subunit E (197 aa).

This sequence belongs to the V-ATPase E subunit family. In terms of assembly, has multiple subunits with at least A(3), B(3), C, D, E, F, H, I and proteolipid K(x).

The protein resides in the cell membrane. In terms of biological role, component of the A-type ATP synthase that produces ATP from ADP in the presence of a proton gradient across the membrane. The protein is A-type ATP synthase subunit E of Thermococcus gammatolerans (strain DSM 15229 / JCM 11827 / EJ3).